The following is an 868-amino-acid chain: Sporulation-specific protein 75 (868 aa).

Over methionine 1 to glycine 34 the chain is Extracellular. The N-linked (GlcNAc...) asparagine glycan is linked to asparagine 2. Residues phenylalanine 35–isoleucine 55 form a helical membrane-spanning segment. Over leucine 56–lysine 127 the chain is Cytoplasmic. The helical transmembrane segment at leucine 128–histidine 148 threads the bilayer. The Extracellular segment spans residues tyrosine 149–asparagine 187. N-linked (GlcNAc...) asparagine glycosylation occurs at asparagine 184. Residues threonine 188–serine 208 form a helical membrane-spanning segment. The Cytoplasmic portion of the chain corresponds to serine 209 to arginine 481. Residues isoleucine 482–proline 502 traverse the membrane as a helical segment. Residue asparagine 503 is glycosylated (N-linked (GlcNAc...) asparagine). Topologically, residues asparagine 503–asparagine 527 are extracellular. The chain crosses the membrane as a helical span at residues leucine 528 to leucine 548. The Cytoplasmic portion of the chain corresponds to serine 549–phenylalanine 569. A helical transmembrane segment spans residues valine 570–isoleucine 590. Topologically, residues glutamate 591 to cysteine 611 are extracellular. The helical transmembrane segment at alanine 612 to leucine 632 threads the bilayer. Residues arginine 633–threonine 660 lie on the Cytoplasmic side of the membrane. Residues serine 661–tyrosine 683 traverse the membrane as a helical segment. At serine 684–leucine 692 the chain is on the extracellular side. The chain crosses the membrane as a helical span at residues leucine 693–tyrosine 713. The Cytoplasmic segment spans residues asparagine 714–leucine 730. The chain crosses the membrane as a helical span at residues methionine 731–phenylalanine 751. Residues aspartate 752 to glutamine 753 lie on the Extracellular side of the membrane. A helical transmembrane segment spans residues tyrosine 754–isoleucine 774. Topologically, residues serine 775 to histidine 868 are cytoplasmic.

This sequence belongs to the CSC1 (TC 1.A.17) family.

Its subcellular location is the membrane. Its function is as follows. Acts as an osmosensitive calcium-permeable cation channel. Required for spore wall assembly and ascus formation. This is Sporulation-specific protein 75 (SPO75) from Saccharomyces cerevisiae (strain ATCC 204508 / S288c) (Baker's yeast).